The sequence spans 199 residues: DnaJ homolog subfamily C member 5B (199 aa).

2 positions are modified to phosphoserine: S14 and S16. The region spanning 19 to 84 (SLYEILGLHK…SKRNIYDKYG (66 aa)) is the J domain.

As to quaternary structure, interacts with the chaperone complex consisting of HSC70 and SGTA. In terms of processing, palmitoylated.

It is found in the membrane. This is DnaJ homolog subfamily C member 5B (Dnajc5b) from Mus musculus (Mouse).